The following is a 304-amino-acid chain: Aspartate carbamoyltransferase catalytic subunit (304 aa).

Residues Arg-49 and Thr-50 each coordinate carbamoyl phosphate. Lys-77 lines the L-aspartate pocket. Positions 99, 127, and 130 each coordinate carbamoyl phosphate. Arg-160 and Arg-211 together coordinate L-aspartate. Residues Ala-252 and Pro-253 each coordinate carbamoyl phosphate.

Belongs to the aspartate/ornithine carbamoyltransferase superfamily. ATCase family. As to quaternary structure, heterododecamer (2C3:3R2) of six catalytic PyrB chains organized as two trimers (C3), and six regulatory PyrI chains organized as three dimers (R2).

The enzyme catalyses carbamoyl phosphate + L-aspartate = N-carbamoyl-L-aspartate + phosphate + H(+). It participates in pyrimidine metabolism; UMP biosynthesis via de novo pathway; (S)-dihydroorotate from bicarbonate: step 2/3. Catalyzes the condensation of carbamoyl phosphate and aspartate to form carbamoyl aspartate and inorganic phosphate, the committed step in the de novo pyrimidine nucleotide biosynthesis pathway. The sequence is that of Aspartate carbamoyltransferase catalytic subunit from Bacillus mycoides (strain KBAB4) (Bacillus weihenstephanensis).